The sequence spans 334 residues: Cytoskeleton protein RodZ (334 aa).

Topologically, residues 1-111 (MNTEATHDQN…LGKRRKKRDG (111 aa)) are cytoplasmic. The HTH cro/C1-type domain maps to 19–71 (LRNAREQLGLSQQAVAERLCLKVSTVRDIEEDKAPSDLASTFLRGYIRSYARL). The segment at residues 30–49 (QQAVAERLCLKVSTVRDIEE) is a DNA-binding region (H-T-H motif). A helical; Signal-anchor for type II membrane protein membrane pass occupies residues 112-132 (WLMSFTWLVLFVVVGLTGAWW). Over 133-334 (WQNHKAQQEE…TLNAEPTPAQ (202 aa)) the chain is Periplasmic. Disordered regions lie at residues 155–207 (NADK…ATQN) and 221–241 (ATSA…SQAG). The span at 176–207 (TTPAQTAPAPATPVDSTAATQTPAATATATQN) shows a compositional bias: low complexity.

It belongs to the RodZ family.

It localises to the cell inner membrane. Functionally, cytoskeletal protein that is involved in cell-shape control through regulation of the length of the long axis. This is Cytoskeleton protein RodZ from Salmonella schwarzengrund (strain CVM19633).